The sequence spans 326 residues: Beta-ketoacyl-[acyl-carrier-protein] synthase III (326 aa).

Active-site residues include C112 and H251. Positions 252–256 are ACP-binding; the sequence is QANSR. N281 is an active-site residue.

The protein belongs to the thiolase-like superfamily. FabH family. In terms of assembly, homodimer.

It localises to the cytoplasm. The catalysed reaction is malonyl-[ACP] + acetyl-CoA + H(+) = 3-oxobutanoyl-[ACP] + CO2 + CoA. It functions in the pathway lipid metabolism; fatty acid biosynthesis. In terms of biological role, catalyzes the condensation reaction of fatty acid synthesis by the addition to an acyl acceptor of two carbons from malonyl-ACP. Catalyzes the first condensation reaction which initiates fatty acid synthesis and may therefore play a role in governing the total rate of fatty acid production. Possesses both acetoacetyl-ACP synthase and acetyl transacylase activities. Its substrate specificity determines the biosynthesis of branched-chain and/or straight-chain of fatty acids. The protein is Beta-ketoacyl-[acyl-carrier-protein] synthase III of Clostridium botulinum (strain ATCC 19397 / Type A).